We begin with the raw amino-acid sequence, 333 residues long: 4-hydroxyproline 2-epimerase (333 aa).

Cysteine 90 acts as the Proton acceptor in catalysis. Substrate is bound by residues 91 to 92 (GH), histidine 223, and aspartate 249. Cysteine 253 serves as the catalytic Proton donor. Position 254–255 (254–255 (GT)) interacts with substrate.

This sequence belongs to the proline racemase family.

It carries out the reaction trans-4-hydroxy-L-proline = cis-4-hydroxy-D-proline. Its function is as follows. Catalyzes the epimerization of trans-4-hydroxy-L-proline (t4LHyp) to cis-4-hydroxy-D-proline (c4DHyp). May be involved in a degradation pathway of t4LHyp, which would allow S.novella to grow on t4LHyp as a sole carbon source. The chain is 4-hydroxyproline 2-epimerase from Ancylobacter novellus (strain ATCC 8093 / DSM 506 / JCM 20403 / CCM 1077 / IAM 12100 / NBRC 12443 / NCIMB 10456) (Starkeya novella).